The chain runs to 3165 residues: Protein eyes shut homolog (3165 aa).

The first 21 residues, 1 to 21 (MTDKSIVILSLMVFHSSFING), serve as a signal peptide directing secretion. N166 carries N-linked (GlcNAc...) asparagine glycosylation. EGF-like domains lie at 170 to 212 (KQQF…KYCQ), 213 to 254 (ELDA…KNCS), and 256 to 292 (IIGQ…PFCE). 9 disulfide bridges follow: C174-C189, C183-C200, C202-C211, C217-C228, C222-C242, C244-C253, C260-C270, C265-C280, and C282-C291. N-linked (GlcNAc...) asparagine glycosylation is found at N269 and N272. N-linked (GlcNAc...) asparagine glycans are attached at residues N311 and N343. EGF-like domains follow at residues 332–368 (DVSE…LLCK) and 370–406 (IQTS…KNCE). 4 disulfide bridges follow: C341-C356, C358-C367, C374-C385, and C396-C405. N-linked (GlcNAc...) asparagine glycosylation is found at N506 and N566. EGF-like domains lie at 567–602 (TTDD…RLCV) and 643–679 (DTED…TQCE). Cystine bridges form between C575–C590, C592–C601, C669–C678, C685–C696, C690–C705, C707–C719, C737–C748, C742–C757, C759–C768, C775–C786, C780–C795, C797–C806, C813–C824, C818–C835, C837–C846, C853–C866, C860–C876, C878–C887, C894–C905, C899–C914, C916–C925, C932–C943, C937–C952, C954–C963, C970–C981, C975–C990, C992–C1001, C1008–C1019, C1013–C1028, C1030–C1039, C1046–C1056, C1051–C1065, C1067–C1076, C1083–C1094, C1088–C1103, C1105–C1114, C1121–C1137, C1131–C1147, C1149–C1158, C1165–C1176, C1170–C1185, C1187–C1196, C2037–C2063, C2103–C2114, C2108–C2128, and C2130–C2139. An EGF-like 8; calcium-binding domain is found at 681–720 (DIDECASHPCKNGATCIDQPGNYFCQCVPPFKVVDGFSCL). The region spanning 733-769 (DIDDCILNACEHNSTCKDLHLSYQCVCLSDWEGNFCE) is the EGF-like 9; calcium-binding domain. The EGF-like 10; calcium-binding domain occupies 771–807 (ESNECKMNPCKNNSTCTDLYKSYRCECTSGWTGQNCS). EGF-like domains lie at 809-847 (EINE…QFCH), 849-888 (RYNL…KNCE), and 890-926 (DVKD…SLCE). Residues 928-964 (EINECSSEPCKNNGTCVDLTNRFFCNCEPEYHGPFCE) form the EGF-like 14; calcium-binding domain. Positions 966–1002 (DVNKCKISPCLDEENCVYRTDGYNCLCAPGYTGINCE) constitute an EGF-like 15 domain. In terms of domain architecture, EGF-like 16; calcium-binding spans 1004 to 1040 (NLDECLSEPCLHDGVCIDGINHYTCDCKSGFFGTHCE). 3 consecutive EGF-like domains span residues 1042–1077 (NAND…TQCK), 1079–1115 (KIND…AYCE), and 1117–1159 (SIDN…QFCE). The EGF-like 20; calcium-binding domain maps to 1161–1197 (NINECSSSPCLHGADCEDHINGYVCKCQPGWSGHHCE). The Laminin G-like 1 domain occupies 1883–2063 (FSCVRYYGDS…AVKNYHINNC (181 aa)). Residues 2099 to 2140 (APSVCQQDVCHNGGTCHAIFLSSGIVSFQCDCPLHFTGRFCE) enclose the EGF-like 21 domain. Residues 2145 to 2339 (LFFPSFNGNS…NIENCHVPWC (195 aa)) form the Laminin G-like 2 domain. N-linked (GlcNAc...) asparagine glycosylation is present at N2170. EGF-like domains follow at residues 2335 to 2368 (HVPW…YSGK) and 2371 to 2408 (QFAS…PLCT). 19 disulfides stabilise this stretch: C2339–C2350, C2344–C2359, C2375–C2386, C2380–C2396, C2398–C2407, C2576–C2609, C2614–C2625, C2619–C2634, C2636–C2645, C2652–C2668, C2662–C2677, C2679–C2688, C2868–C2895, C2900–C2911, C2905–C2920, C2922–C2931, C2937–C2948, C2942–C2958, and C2960–C2969. Positions 2419–2609 (SGTDAFGYTS…PNAGRSVGQC (191 aa)) constitute a Laminin G-like 3 domain. 2 consecutive EGF-like domains span residues 2610–2646 (HASP…SFCT) and 2648–2689 (TVST…IYCE). The Laminin G-like 4 domain maps to 2717-2895 (DPSFRSNELS…AKGGSNVGDC (179 aa)). EGF-like domains lie at 2896 to 2932 (DGTA…NTCN) and 2933 to 2970 (QSVS…RYCE). Residues 2975–3165 (FSTAKFMGNS…YDGDEQNEVT (191 aa)) form the Laminin G-like 5 domain.

This sequence belongs to the EYS family. As to expression, expressed in retina (at protein level). Isoform 1: Detected in retina. Isoform 2: Detected in retina. Isoform 3: Strongly expressed in retina and testis. Isoform 4: Strongly expressed in testis, and weakly expressed in retina.

Its subcellular location is the cell projection. It localises to the cilium. The protein resides in the photoreceptor outer segment. It is found in the cytoplasm. The protein localises to the cytoskeleton. Its subcellular location is the cilium axoneme. It localises to the microtubule organizing center. The protein resides in the centrosome. It is found in the secreted. The protein localises to the extracellular space. Its subcellular location is the extracellular matrix. It localises to the interphotoreceptor matrix. Functionally, required to maintain the integrity of photoreceptor cells. Specifically required for normal morphology of the photoreceptor ciliary pocket, and might thus facilitate protein trafficking between the photoreceptor inner and outer segments via the transition zone. The protein is Protein eyes shut homolog (EYS) of Homo sapiens (Human).